The sequence spans 136 residues: Histone H2B.5 (136 aa).

Over residues 1-36 (MAPKAEKKPAAEKKPVETEKKPKAEKRVPGKDGGAD) the composition is skewed to basic and acidic residues. The segment at 1–44 (MAPKAEKKPAAEKKPVETEKKPKAEKRVPGKDGGADKKKKKAKK) is disordered. Residues lysine 7 and lysine 26 each carry the N6-acetyllysine modification. Lysine 132 is covalently cross-linked (Glycyl lysine isopeptide (Lys-Gly) (interchain with G-Cter in ubiquitin)).

This sequence belongs to the histone H2B family. The nucleosome is a histone octamer containing two molecules each of H2A, H2B, H3 and H4 assembled in one H3-H4 heterotetramer and two H2A-H2B heterodimers. The octamer wraps approximately 147 bp of DNA. Post-translationally, can be acetylated to form H2BK6ac and H2BK33ac. Monoubiquitinated to form H2BK143ub1; may give a specific tag for epigenetic transcriptional activation.

It is found in the nucleus. It localises to the chromosome. Its function is as follows. Core component of nucleosome. Nucleosomes wrap and compact DNA into chromatin, limiting DNA accessibility to the cellular machineries which require DNA as a template. Histones thereby play a central role in transcription regulation, DNA repair, DNA replication and chromosomal stability. DNA accessibility is regulated via a complex set of post-translational modifications of histones, also called histone code, and nucleosome remodeling. This Triticum aestivum (Wheat) protein is Histone H2B.5.